We begin with the raw amino-acid sequence, 170 residues long: MKTQRDSPSLGRWSLVLLLLGLVMPLAIVAQVLSYQEAVLRAIDGINQRSSDANLYRLLDLDPRPTMDGDPDTPKPVSFTVKETVCPRTTQKSPEDCDFKEDGLVKRCVGTVILNQARDSFDISCDKDNRRFARLGNFFRKVKEKIGGGLKKVGQKIKDFLGNLVPRTAS.

The N-terminal stretch at 1 to 30 (MKTQRDSPSLGRWSLVLLLLGLVMPLAIVA) is a signal peptide. The propeptide at 31-131 (QVLSYQEAVL…DISCDKDNRR (101 aa)) is cathelin-like domain (CLD). 2 cysteine pairs are disulfide-bonded: Cys86–Cys97 and Cys108–Cys125. The segment at 150-162 (LKKVGQKIKDFLG) is active core.

The protein belongs to the cathelicidin family. As to quaternary structure, monomer, homodimer or homotrimer (in vitro). Oligomerizes as tetra- or hexamer in solution (in vitro). In terms of processing, proteolytically cleaved by proteinase PRTN3 into antibacterial peptide LL-37. Proteolytically cleaved by cathepsin CTSG and neutrophil elastase ELANE. Resistant to proteolytic degradation in solution, and when bound to both zwitterionic (mimicking mammalian membranes) and negatively charged membranes (mimicking bacterial membranes). Post-translationally, after secretion onto the skin surface, the CAMP gene product is processed by a serine protease-dependent mechanism into multiple novel antimicrobial peptides distinct from and shorter than cathelicidin LL-37. These peptides show enhanced antimicrobial action, acquiring the ability to kill skin pathogens such as S.aureus, E.coli and C.albicans. These peptides have lost the ability to stimulate CXCL8/IL8 release from keratinocytes. The peptides act synergistically, killing bacteria at lower concentrations when present together, and maintain activity at increased salt condition.

Its subcellular location is the secreted. The protein localises to the vesicle. Antimicrobial protein that is an integral component of the innate immune system. Binds to bacterial lipopolysaccharides (LPS). Acts via neutrophil N-formyl peptide receptors to enhance the release of CXCL2. Postsecretory processing generates multiple cathelicidin antimicrobial peptides with various lengths which act as a topical antimicrobial defense in sweat on skin. The unprocessed precursor form, cathelicidin antimicrobial peptide, inhibits the growth of Gram-negative E.coli and E.aerogenes with efficiencies comparable to that of the mature peptide LL-37 (in vitro). In terms of biological role, antimicrobial peptide that is an integral component of the innate immune system. Binds to bacterial lipopolysaccharides (LPS). Causes membrane permeabilization by forming transmembrane pores (in vitro). Causes lysis of E.coli. Exhibits antimicrobial activity against Gram-negative bacteria such as P.aeruginosa, S.typhimurium, E.aerogenes, E.coli and P.syringae, Gram-positive bacteria such as L.monocytogenes, S.epidermidis, S.pyogenes and S.aureus, as well as vancomycin-resistant enterococci (in vitro). Exhibits antimicrobial activity against methicillin-resistant S.aureus, P.mirabilis, and C.albicans in low-salt media, but not in media containing 100 mM NaCl (in vitro). Forms chiral supramolecular assemblies with quinolone signal (PQS) molecules of P.aeruginosa, which may lead to interference of bacterial quorum signaling and perturbance of bacterial biofilm formation. May form supramolecular fiber-like assemblies on bacterial membranes. Induces cytokine and chemokine producation as well as TNF/TNFA and CSF2/GMCSF production in normal human keratinocytes. Exhibits hemolytic activity against red blood cells. Functionally, exhibits antimicrobial activity against E.coli and B.megaterium (in vitro). This is Cathelicidin antimicrobial peptide from Papio papio (Guinea baboon).